We begin with the raw amino-acid sequence, 94 residues long: Putative pterin-4-alpha-carbinolamine dehydratase (94 aa).

Belongs to the pterin-4-alpha-carbinolamine dehydratase family.

It carries out the reaction (4aS,6R)-4a-hydroxy-L-erythro-5,6,7,8-tetrahydrobiopterin = (6R)-L-erythro-6,7-dihydrobiopterin + H2O. The chain is Putative pterin-4-alpha-carbinolamine dehydratase from Mycobacterium avium (strain 104).